The chain runs to 190 residues: R46 site-specific recombinase (190 aa).

Positions 2-137 (RLFGYARVST…EGRQEAKLKG (136 aa)) constitute a Resolvase/invertase-type recombinase catalytic domain. The active-site O-(5'-phospho-DNA)-serine intermediate is serine 10. A DNA-binding region (H-T-H motif) is located at residues 161-180 (ATDIARRLSIARSTVYKILE).

Belongs to the site-specific recombinase resolvase family.

Site-specific recombination protein. The polypeptide is R46 site-specific recombinase (tnpR) (Escherichia coli).